A 196-amino-acid polypeptide reads, in one-letter code: ATP-dependent Clp protease proteolytic subunit (196 aa).

Ser99 (nucleophile) is an active-site residue. Residue His124 is part of the active site.

It belongs to the peptidase S14 family. Fourteen ClpP subunits assemble into 2 heptameric rings which stack back to back to give a disk-like structure with a central cavity, resembling the structure of eukaryotic proteasomes.

It localises to the cytoplasm. The enzyme catalyses Hydrolysis of proteins to small peptides in the presence of ATP and magnesium. alpha-casein is the usual test substrate. In the absence of ATP, only oligopeptides shorter than five residues are hydrolyzed (such as succinyl-Leu-Tyr-|-NHMec, and Leu-Tyr-Leu-|-Tyr-Trp, in which cleavage of the -Tyr-|-Leu- and -Tyr-|-Trp bonds also occurs).. Functionally, cleaves peptides in various proteins in a process that requires ATP hydrolysis. Has a chymotrypsin-like activity. Plays a major role in the degradation of misfolded proteins. This is ATP-dependent Clp protease proteolytic subunit from Helicobacter hepaticus (strain ATCC 51449 / 3B1).